Consider the following 1184-residue polypeptide: Probable phospholipid-transporting ATPase 12 (1184 aa).

Over Met1 to Leu75 the chain is Cytoplasmic. Residues Pro76 to Leu97 traverse the membrane as a helical segment. Residues Ser98–Pro101 lie on the Extracellular side of the membrane. A helical transmembrane segment spans residues Leu102–Lys124. Residues Glu125–Ile306 are Cytoplasmic-facing. The helical transmembrane segment at Ile307–Trp328 threads the bilayer. Residues Thr329–His364 are Extracellular-facing. Residues Phe365–Val382 form a helical membrane-spanning segment. Topologically, residues Ser383 to Ser921 are cytoplasmic. Catalysis depends on Asp430, which acts as the 4-aspartylphosphate intermediate. 2 residues coordinate Mg(2+): Asp866 and Asp870. A helical transmembrane segment spans residues Lys922–Tyr941. At Glu942 to Asp955 the chain is on the extracellular side. Residues Trp956–Ile975 traverse the membrane as a helical segment. At Phe976 to Arg1005 the chain is on the cytoplasmic side. The helical transmembrane segment at Ile1006–Leu1028 threads the bilayer. Residues Glu1029 to Gly1041 are Extracellular-facing. The chain crosses the membrane as a helical span at residues Arg1042–Thr1064. Residues Ile1065–Leu1070 are Cytoplasmic-facing. Residues Ile1071–Gly1091 traverse the membrane as a helical segment. The Extracellular portion of the chain corresponds to Ser1092–Ala1108. The helical transmembrane segment at Leu1109–Phe1133 threads the bilayer. The Cytoplasmic segment spans residues Ser1134–Ser1184.

It belongs to the cation transport ATPase (P-type) (TC 3.A.3) family. Type IV subfamily.

The protein resides in the membrane. It catalyses the reaction ATP + H2O + phospholipidSide 1 = ADP + phosphate + phospholipidSide 2.. Functionally, involved in transport of phospholipids. This is Probable phospholipid-transporting ATPase 12 from Arabidopsis thaliana (Mouse-ear cress).